A 67-amino-acid chain; its full sequence is Sec-independent protein translocase protein TatA (67 aa).

Residues 1 to 21 (MGSFSLTHWIIVLIIVVLIFG) traverse the membrane as a helical segment. Positions 43-67 (LNEGTDGKEAQKDDVIEHKKDEDKA) are disordered. Over residues 47–67 (TDGKEAQKDDVIEHKKDEDKA) the composition is skewed to basic and acidic residues.

It belongs to the TatA/E family. In terms of assembly, the Tat system comprises two distinct complexes: a TatABC complex, containing multiple copies of TatA, TatB and TatC subunits, and a separate TatA complex, containing only TatA subunits. Substrates initially bind to the TatABC complex, which probably triggers association of the separate TatA complex to form the active translocon.

Its subcellular location is the cell inner membrane. Its function is as follows. Part of the twin-arginine translocation (Tat) system that transports large folded proteins containing a characteristic twin-arginine motif in their signal peptide across membranes. TatA could form the protein-conducting channel of the Tat system. The chain is Sec-independent protein translocase protein TatA from Neisseria gonorrhoeae (strain ATCC 700825 / FA 1090).